Reading from the N-terminus, the 299-residue chain is Phosphate import ATP-binding protein PstB 1 (299 aa).

A disordered region spans residues 1-51 (MTENEMTSNDSTEPTPTTETAASSPDPSGDPLIEQSIDVEGTDSTAAETGK). The segment covering 10 to 27 (DSTEPTPTTETAASSPDP) has biased composition (low complexity). Residues 54–294 (IESSDLNVFY…PESQRVEDYI (241 aa)) form the ABC transporter domain. An ATP-binding site is contributed by 86 to 93 (GPSGCGKS).

The protein belongs to the ABC transporter superfamily. Phosphate importer (TC 3.A.1.7) family. In terms of assembly, the complex is composed of two ATP-binding proteins (PstB), two transmembrane proteins (PstC and PstA) and a solute-binding protein (PstS).

Its subcellular location is the cell membrane. It catalyses the reaction phosphate(out) + ATP + H2O = ADP + 2 phosphate(in) + H(+). Part of the ABC transporter complex PstSACB involved in phosphate import. Responsible for energy coupling to the transport system. The sequence is that of Phosphate import ATP-binding protein PstB 1 from Haloarcula marismortui (strain ATCC 43049 / DSM 3752 / JCM 8966 / VKM B-1809) (Halobacterium marismortui).